The chain runs to 106 residues: Pyruvate decarboxylase 2 (106 aa).

Mg(2+)-binding residues include Asn-10 and Gly-12.

The protein belongs to the TPP enzyme family. In terms of assembly, homotetramer. A metal cation is required as a cofactor. Requires thiamine diphosphate as cofactor.

It carries out the reaction a 2-oxocarboxylate + H(+) = an aldehyde + CO2. In Zea mays (Maize), this protein is Pyruvate decarboxylase 2 (PDC2).